A 526-amino-acid chain; its full sequence is Probable fucosyltransferase 7 (526 aa).

The Cytoplasmic portion of the chain corresponds to 1-4 (MKTK). Residues 5 to 25 (LMITIFSCLLLWSMLLLLSFS) traverse the membrane as a helical; Signal-anchor for type II membrane protein segment. Residues 26 to 526 (NIFKHQLLGA…KLVDDTKNEL (501 aa)) lie on the Lumenal side of the membrane. 3 N-linked (GlcNAc...) asparagine glycosylation sites follow: Asn-211, Asn-215, and Asn-363.

The protein belongs to the glycosyltransferase 37 family. In terms of tissue distribution, expressed in roots, leaves, stems and seedlings.

The protein resides in the golgi apparatus. It is found in the golgi stack membrane. The protein operates within protein modification; protein glycosylation. Its function is as follows. May be involved in cell wall biosynthesis. May act as a fucosyltransferase. This Arabidopsis thaliana (Mouse-ear cress) protein is Probable fucosyltransferase 7 (FUT7).